A 383-amino-acid chain; its full sequence is Protein KES1 (383 aa).

Positions 317 to 339 (FETASKDKARIENAQRQKRKDEA) are enriched in basic and acidic residues. Positions 317 to 346 (FETASKDKARIENAQRQKRKDEAAAGTPHQ) are disordered.

It belongs to the OSBP family.

Its function is as follows. Lipid transporter involved in lipid countertransport between the Golgi complex and membranes of the endoplasmic reticulum: specifically exchanges sterol with phosphatidylinositol 4-phosphate (PI4P), delivering sterol to the Golgi in exchange for PI4P, which is degraded by the SAC1 phosphatase in the endoplasmic reticulum. This chain is Protein KES1 (KES1), found in Mycosarcoma maydis (Corn smut fungus).